The sequence spans 491 residues: MANYFNTLNLRQQLAQLGKCRFMGRDEFADGASYLQGKKVVIVGCGAQGLNQGLNMRDSGLDISYALRKEAIAEKRASWRKATENGFKVGTYEELIPQADLVVNLTPDKQHSDVVRSVQPLMKDGAALGYSHGFNIVEVGEQIRKDITVVMVAPKCPGTEVREEYKRGFGVPTLIAVHPENDPKGEGMAIAKAWAAATGGHRAGVLESSFVAEVKSDLMGEQTILCGMLQAGSLLCFDKLVEEGTDPAYAEKLIQFGWETITEALKQGGITLMMDRLSNPAKLRAYALSEQLKEIMAPLFQKHMDDIISGEFSSGMMADWANDDKKLLTWREETGKTAFETAPQYEGKIGEQEYFDKGVLMIAMVKAGVELAFETMVDSGIIEESAYYESLHELPLIANTIARKRLYEMNVVISDTAEYGNYLFSYACVPLLKPFMAELQPGDLGKAIPEGAVDNAQLRDVNEAIRSHAIEQVGKKLRGYMTDMKRIAVAG.

Positions 15-208 (AQLGKCRFMG…GGHRAGVLES (194 aa)) constitute a KARI N-terminal Rossmann domain. Residues 45–48 (CGAQ), R68, R76, S78, and 108–110 (DKQ) each bind NADP(+). H132 is a catalytic residue. NADP(+) is bound at residue G158. KARI C-terminal knotted domains are found at residues 209–344 (SFVA…TAPQ) and 345–484 (YEGK…MTDM). Positions 217, 221, 389, and 393 each coordinate Mg(2+). Substrate is bound at residue S414.

Belongs to the ketol-acid reductoisomerase family. It depends on Mg(2+) as a cofactor.

It carries out the reaction (2R)-2,3-dihydroxy-3-methylbutanoate + NADP(+) = (2S)-2-acetolactate + NADPH + H(+). It catalyses the reaction (2R,3R)-2,3-dihydroxy-3-methylpentanoate + NADP(+) = (S)-2-ethyl-2-hydroxy-3-oxobutanoate + NADPH + H(+). The protein operates within amino-acid biosynthesis; L-isoleucine biosynthesis; L-isoleucine from 2-oxobutanoate: step 2/4. Its pathway is amino-acid biosynthesis; L-valine biosynthesis; L-valine from pyruvate: step 2/4. Functionally, involved in the biosynthesis of branched-chain amino acids (BCAA). Catalyzes an alkyl-migration followed by a ketol-acid reduction of (S)-2-acetolactate (S2AL) to yield (R)-2,3-dihydroxy-isovalerate. In the isomerase reaction, S2AL is rearranged via a Mg-dependent methyl migration to produce 3-hydroxy-3-methyl-2-ketobutyrate (HMKB). In the reductase reaction, this 2-ketoacid undergoes a metal-dependent reduction by NADPH to yield (R)-2,3-dihydroxy-isovalerate. The sequence is that of Ketol-acid reductoisomerase (NADP(+)) from Escherichia coli (strain UTI89 / UPEC).